Here is a 477-residue protein sequence, read N- to C-terminus: ETS translocation variant 1 (477 aa).

A Phosphoserine modification is found at serine 94. The interval 128-179 is disordered; that stretch reads PQVGMRPSNPPTPSSTPVSPLHHASPNTAHTPKPDRAFPAHLPPSQSIPDST. Phosphoserine; by RPS6KA1 and RPS6KA5 is present on residues serine 191 and serine 216. Lysine 317 participates in a covalent cross-link: Glycyl lysine isopeptide (Lys-Gly) (interchain with G-Cter in SUMO2). A DNA-binding region (ETS) is located at residues 335–415; sequence LQLWQFLVAL…AGERYVYKFV (81 aa).

Belongs to the ETS family. Post-translationally, sumoylated. In terms of processing, phosphorylated at Ser-191 and Ser-216 by RPS6KA1 and RPS6KA5; phosphorylation activates transcriptional activity. In terms of tissue distribution, abundant in kidney. Moderate levels seen in the heart, brain, lung, embryo and lower levels seen in spleen, intestine, testis and thymus.

It is found in the nucleus. Its function is as follows. Transcriptional activator that binds to DNA sequences containing the consensus pentanucleotide 5'-CGGA[AT]-3'. Required for olfactory dopaminergic neuron differentiation; may directly activate expression of tyrosine hydroxylase (TH). In Mus musculus (Mouse), this protein is ETS translocation variant 1.